The chain runs to 422 residues: Mannose-1-phosphate guanylyltransferase regulatory subunit alpha-B (422 aa).

The substrate-binding domain stretch occupies residues 2–253; that stretch reads LKAIILIGGP…QHFWSQIKSA (252 aa). The GDP-alpha-D-mannose site is built by E85 and Q249. The segment at 275–422 is hexapeptide repeat domain; sequence LATNQGGTPK…NRSFKNQIIL (148 aa). The tract at residues 358 to 386 is C-loop; it reads TPSDPNPNDPYAKIDSETLFRDGGLTPSI.

Belongs to the transferase hexapeptide repeat family. In terms of assembly, component of the GMPPA-GMPPB mannose-1-phosphate guanylyltransferase complex composed of 4 GMPPA subunits and 8 GMPPB subunits; the complex is organized into three layers, a central layer made up of 2 GMPPA dimers sandwiched between two layers each made up of 2 GMPPB dimers.

It participates in nucleotide-sugar biosynthesis; GDP-alpha-D-mannose biosynthesis; GDP-alpha-D-mannose from alpha-D-mannose 1-phosphate (GTP route): step 1/1. Functionally, regulatory subunit of the GMPPA-GMPPB mannose-1-phosphate guanylyltransferase complex; reduces the catalytic activity of GMPPB when part of the complex. Mediates allosteric feedback inhibition of GMPPB catalytic activity upon binding GDP-alpha-D-mannose. Together with GMPPB regulates GDP-alpha-D-mannose levels. One of two paralogs (gmppaa and gmppab) that may have redundant functions. The protein is Mannose-1-phosphate guanylyltransferase regulatory subunit alpha-B (gmppab) of Danio rerio (Zebrafish).